The following is an 813-amino-acid chain: MAEKYNPQETEKKWQDKWAADRLYHAGEDSPKPKWYSLTMFPYTSGNLHIGHWYAEVPADCFARYKRLNGFNVMRPVGFDSFGLPAENAAIKHHIHPRIWTLNNVENMRRQLKTIGAMFDWDREVITCLPEYYKWTQWFFLKLYEAGLAYRAKAPVNWCPSCQAVLANEQVVDGTCWRCETPTTRRDLEQWFFRITNYADELKDHDGLDWPEKITAMQRNWVGKSYGAEVSFALDCPAAPEQEIKVFTTRPDTIYGVTFMVLAPEHPLVEKITTPENKAAVDEYIKKSRACTEIERLSTEREKDGVFTGAYVTNRVNGHKVPVWIGDYVLQSYGTGAVMGVPAHDERDFVFAQKYDLPVITVIAPPDYDGQPLEAAYINEGVMQNSGPFNGLPNTEGKEKVCDYLAEHGWGKKTVNYKLRDWLISRQRYWGAPIPMIYCEKCGIVPVPEKDLPVLLPEDVEFRSGGESPLKYNEGFVNTTCPVCGGKAKRETDTMDTFMCSSWYFLRYTSPGYDKGPFDPEKLRYWMPVDLYTGGAEHAVMHLFYSRFFTKALRDMGIIDFGEPFKKLFNQGIIVSNHQKMSKSKGNVVTPDNLVAEVGTDAVRAYLMFVGPWDQGGEWNDSGLSGMSRWLNRVWNLFTEEYTPQTASAEAERELKRTLHQTIKKITMDIERLRFNTVVAALMELSNSLAKFKEAAAVSAESWQNSLKTFALMLAPVAPHIAEELWANLDMEYSIHNQSWPKWDEELAKDEVITLIIQVNGKLRERLEMPAGISEDEAKETALNSTRVKPHLQGKTPASVIYVPGKLVNIVVK.

The short motif at 42 to 52 is the 'HIGH' region element; sequence PYTSGNLHIGH. The short motif at 580–584 is the 'KMSKS' region element; sequence KMSKS. Lys-583 serves as a coordination point for ATP.

The protein belongs to the class-I aminoacyl-tRNA synthetase family.

Its subcellular location is the cytoplasm. It carries out the reaction tRNA(Leu) + L-leucine + ATP = L-leucyl-tRNA(Leu) + AMP + diphosphate. In Dehalococcoides mccartyi (strain ATCC BAA-2266 / KCTC 15142 / 195) (Dehalococcoides ethenogenes (strain 195)), this protein is Leucine--tRNA ligase.